A 387-amino-acid chain; its full sequence is Succinyl-diaminopimelate desuccinylase (387 aa).

Histidine 74 provides a ligand contact to Zn(2+). Aspartate 76 is an active-site residue. A Zn(2+)-binding site is contributed by aspartate 107. The active-site Proton acceptor is the glutamate 142. Residues glutamate 143, glutamate 171, and histidine 360 each contribute to the Zn(2+) site.

This sequence belongs to the peptidase M20A family. DapE subfamily. Homodimer. Requires Zn(2+) as cofactor. Co(2+) serves as cofactor.

The enzyme catalyses N-succinyl-(2S,6S)-2,6-diaminopimelate + H2O = (2S,6S)-2,6-diaminopimelate + succinate. Its pathway is amino-acid biosynthesis; L-lysine biosynthesis via DAP pathway; LL-2,6-diaminopimelate from (S)-tetrahydrodipicolinate (succinylase route): step 3/3. Catalyzes the hydrolysis of N-succinyl-L,L-diaminopimelic acid (SDAP), forming succinate and LL-2,6-diaminopimelate (DAP), an intermediate involved in the bacterial biosynthesis of lysine and meso-diaminopimelic acid, an essential component of bacterial cell walls. In Rhodopseudomonas palustris (strain ATCC BAA-98 / CGA009), this protein is Succinyl-diaminopimelate desuccinylase.